Consider the following 211-residue polypeptide: Uracil phosphoribosyltransferase (211 aa).

5-phospho-alpha-D-ribose 1-diphosphate contacts are provided by residues Arg79, Arg104, and 131 to 139 (DPMLATGGS). Residues Ile196 and 201–203 (GDA) each bind uracil. Asp202 lines the 5-phospho-alpha-D-ribose 1-diphosphate pocket.

It belongs to the UPRTase family. The cofactor is Mg(2+).

The enzyme catalyses UMP + diphosphate = 5-phospho-alpha-D-ribose 1-diphosphate + uracil. Its pathway is pyrimidine metabolism; UMP biosynthesis via salvage pathway; UMP from uracil: step 1/1. Its activity is regulated as follows. Allosterically activated by GTP. In terms of biological role, catalyzes the conversion of uracil and 5-phospho-alpha-D-ribose 1-diphosphate (PRPP) to UMP and diphosphate. This is Uracil phosphoribosyltransferase from Limosilactobacillus fermentum (strain NBRC 3956 / LMG 18251) (Lactobacillus fermentum).